Reading from the N-terminus, the 206-residue chain is Shieldin complex subunit 1 (206 aa).

Polar residues-rich tracts occupy residues 1-15, 33-43, and 60-69; these read MATQ…TEES, RPSQQTNSEAF, and DSSNLNTEQN. Disordered regions lie at residues 1–21 and 33–69; these read MATQ…LDLP and RPSQ…TEQN.

In terms of assembly, component of the shieldin complex, consisting of SHLD1, SHLD2, SHLD3 and MAD2L2/REV7. Within the complex, SHLD2 forms a scaffold which interacts with a SHLD3-MAD2L2 subcomplex via its N-terminus, and with SHLD1 via its C-terminus. Interacts with ASTE1.

The protein resides in the chromosome. Functionally, component of the shieldin complex, which plays an important role in repair of DNA double-stranded breaks (DSBs). During G1 and S phase of the cell cycle, the complex functions downstream of TP53BP1 to promote non-homologous end joining (NHEJ) and suppress DNA end resection. Mediates various NHEJ-dependent processes including immunoglobulin class-switch recombination, and fusion of unprotected telomeres. The polypeptide is Shieldin complex subunit 1 (Bos taurus (Bovine)).